The sequence spans 228 residues: E3 ubiquitin-protein ligase RNF114 (228 aa).

The segment at 29–68 (CPVCLEVYEKPVQVPCGHVFCSACLQECLKPKKPVCGVCR) adopts an RING-type zinc-finger fold. 2 residues coordinate Zn(2+): C91 and C94. The C2HC RNF-type zinc finger occupies 91-110 (CHGCRKKFFLSKIRSHVATC). The residue at position 102 (K102) is an N6-acetyllysine. Zn(2+) is bound by residues H106 and C110. K112 bears the N6-acetyllysine mark.

Interacts with XAF1, the interaction increases XAF1 stability and proapoptotic effects, and may regulate IFN signaling. Post-translationally, autoubiquitinated. Polyubiquitinated in the presence of E2 enzymes UBE2D1, UBE2D2 and UBE2D3, but only monoubiquitinated in the presence of UBE2E1.

The protein resides in the cytoplasm. Its subcellular location is the nucleus. The catalysed reaction is S-ubiquitinyl-[E2 ubiquitin-conjugating enzyme]-L-cysteine + [acceptor protein]-L-lysine = [E2 ubiquitin-conjugating enzyme]-L-cysteine + N(6)-ubiquitinyl-[acceptor protein]-L-lysine.. Its pathway is protein modification; protein ubiquitination. Its function is as follows. E3 ubiquitin-protein ligase that promotes the ubiquitination of various substrates. In turn, participates in the regulation of many biological processes including cell cycle, apoptosis, osteoclastogenesis as well as innate or adaptive immunity. Acts as negative regulator of NF-kappa-B-dependent transcription by promoting the ubiquitination and stabilization of the NF-kappa-B inhibitor TNFAIP3. May promote the ubiquitination of TRAF6 as well. Also acts as a negative regulator of T-cell activation. Inhibits cellular dsRNA responses and interferon production by targeting MAVS component for proteasomal degradation. Ubiquitinates the CDK inhibitor CDKN1A leading to its degradationand probably also CDKN1B and CDKN1C. This activity stimulates cell cycle G1-to-S phase transition and suppresses cellular senescence. May play a role in spermatogenesis. The polypeptide is E3 ubiquitin-protein ligase RNF114 (RNF114) (Pan troglodytes (Chimpanzee)).